Consider the following 360-residue polypeptide: Phospho-N-acetylmuramoyl-pentapeptide-transferase (360 aa).

10 consecutive transmembrane segments (helical) span residues 2–22 (IAIL…TPLF), 52–72 (MGGV…NISA), 80–100 (GLLL…DDFI), 114–134 (WKII…LQFP), 156–176 (LAFA…NFLI), 189–209 (LDGL…VVTM), 235–255 (LAIV…WNAS), 259–279 (IFMG…LSIL), 284–304 (FLAV…VIQI), and 338–358 (FWLI…AEWV).

It belongs to the glycosyltransferase 4 family. MraY subfamily. Requires Mg(2+) as cofactor.

Its subcellular location is the cell membrane. It catalyses the reaction UDP-N-acetyl-alpha-D-muramoyl-L-alanyl-gamma-D-glutamyl-meso-2,6-diaminopimeloyl-D-alanyl-D-alanine + di-trans,octa-cis-undecaprenyl phosphate = di-trans,octa-cis-undecaprenyl diphospho-N-acetyl-alpha-D-muramoyl-L-alanyl-D-glutamyl-meso-2,6-diaminopimeloyl-D-alanyl-D-alanine + UMP. It functions in the pathway cell wall biogenesis; peptidoglycan biosynthesis. Functionally, catalyzes the initial step of the lipid cycle reactions in the biosynthesis of the cell wall peptidoglycan: transfers peptidoglycan precursor phospho-MurNAc-pentapeptide from UDP-MurNAc-pentapeptide onto the lipid carrier undecaprenyl phosphate, yielding undecaprenyl-pyrophosphoryl-MurNAc-pentapeptide, known as lipid I. The polypeptide is Phospho-N-acetylmuramoyl-pentapeptide-transferase (Beutenbergia cavernae (strain ATCC BAA-8 / DSM 12333 / CCUG 43141 / JCM 11478 / NBRC 16432 / NCIMB 13614 / HKI 0122)).